A 504-amino-acid polypeptide reads, in one-letter code: Maturase K (504 aa).

The protein belongs to the intron maturase 2 family. MatK subfamily.

It is found in the plastid. Its subcellular location is the chloroplast. Usually encoded in the trnK tRNA gene intron. Probably assists in splicing its own and other chloroplast group II introns. The polypeptide is Maturase K (Kokia drynarioides (Hawaiian tree cotton)).